Here is a 269-residue protein sequence, read N- to C-terminus: Interleukin-1 beta (269 aa).

The propeptide occupies 1-116 (MAEVPELASE…TRNNDACVHD (116 aa)).

This sequence belongs to the IL-1 family. As to quaternary structure, monomer. In its precursor form, weakly interacts with full-length MEFV; the mature cytokine does not interact at all. Interacts with integrins ITGAV:ITGBV and ITGA5:ITGB1; integrin-binding is required for IL1B signaling. Interacts with cargo receptor TMED10; the interaction is direct and is required for the secretion of IL1B mature form. Interacts with HSP90AB1; the interaction facilitates cargo translocation into the ERGIC. Interacts with HSP90B1; the interaction facilitates cargo translocation into the ERGIC.

It is found in the cytoplasm. Its subcellular location is the cytosol. It localises to the secreted. The protein resides in the lysosome. The protein localises to the extracellular exosome. Its function is as follows. Potent pro-inflammatory cytokine. Initially discovered as the major endogenous pyrogen, induces prostaglandin synthesis, neutrophil influx and activation, T-cell activation and cytokine production, B-cell activation and antibody production, and fibroblast proliferation and collagen production. Promotes Th17 differentiation of T-cells. Synergizes with IL12/interleukin-12 to induce IFNG synthesis from T-helper 1 (Th1) cells. Plays a role in angiogenesis by inducing VEGF production synergistically with TNF and IL6. Involved in transduction of inflammation downstream of pyroptosis: its mature form is specifically released in the extracellular milieu by passing through the gasdermin-D (GSDMD) pore. The polypeptide is Interleukin-1 beta (IL1B) (Macaca nemestrina (Pig-tailed macaque)).